The following is a 179-amino-acid chain: Large ribosomal subunit protein uL5 (179 aa).

The protein belongs to the universal ribosomal protein uL5 family. As to quaternary structure, part of the 50S ribosomal subunit; part of the 5S rRNA/L5/L18/L25 subcomplex. Contacts the 5S rRNA and the P site tRNA. Forms a bridge to the 30S subunit in the 70S ribosome.

Its function is as follows. This is one of the proteins that bind and probably mediate the attachment of the 5S RNA into the large ribosomal subunit, where it forms part of the central protuberance. In the 70S ribosome it contacts protein S13 of the 30S subunit (bridge B1b), connecting the 2 subunits; this bridge is implicated in subunit movement. Contacts the P site tRNA; the 5S rRNA and some of its associated proteins might help stabilize positioning of ribosome-bound tRNAs. This chain is Large ribosomal subunit protein uL5, found in Staphylococcus saprophyticus subsp. saprophyticus (strain ATCC 15305 / DSM 20229 / NCIMB 8711 / NCTC 7292 / S-41).